A 690-amino-acid chain; its full sequence is Protein SPT2 homolog (690 aa).

The interval methionine 1–glutamine 579 is important for interaction with DNA. Residues glutamate 40–alanine 82 adopt a coiled-coil conformation. Disordered stretches follow at residues proline 105–proline 167 and glutamate 186–isoleucine 619. The span at glutamate 186–lysine 228 shows a compositional bias: basic and acidic residues. The span at serine 229–lysine 243 shows a compositional bias: low complexity. Composition is skewed to basic and acidic residues over residues glutamate 244–alanine 259 and threonine 271–serine 285. Residues histidine 369–serine 380 show a composition bias toward polar residues. Over residues glycine 383–alanine 396 the composition is skewed to gly residues. The segment covering glycine 397 to proline 442 has biased composition (low complexity). 3 stretches are compositionally biased toward gly residues: residues glycine 443–glycine 457, glycine 465–arginine 477, and leucine 489–arginine 521. The segment covering valine 545–glycine 565 has biased composition (polar residues). Positions glycine 580 to arginine 690 are important for interaction with histones. Acidic residues predominate over residues aspartate 593–glutamate 617. A coiled-coil region spans residues arginine 650–arginine 690.

The protein belongs to the SPT2 family. Interacts with POLR1A. Interacts with histones. Interacts with a heterotetrameric complex formed by histone H3 and H4, especially when the histone tetramer is not bound to DNA.

The protein localises to the nucleus. Its subcellular location is the nucleolus. Functionally, histone chaperone that stabilizes pre-existing histone tetramers and regulates replication-independent histone exchange on chromatin. Required for normal chromatin refolding in the coding region of transcribed genes, and for the suppression of spurious transcription. Binds DNA and histones and promotes nucleosome assembly (in vitro). Modulates RNA polymerase 1-mediated transcription. Required for optimal growth in the presence of the DNA damaging agents actinomycin D or mitomycin C (in vitro). Facilitates formation of tetrameric histone complexes containing histone H3 and H4. Modulates RNA polymerase 1-mediated transcription. Binds DNA, with a preference for branched DNA species, such as Y-form DNA and Holliday junction DNA. The polypeptide is Protein SPT2 homolog (SPTY2D1) (Gallus gallus (Chicken)).